A 155-amino-acid polypeptide reads, in one-letter code: Large ribosomal subunit protein bL9c (155 aa).

Belongs to the bacterial ribosomal protein bL9 family.

The protein localises to the plastid. It is found in the chloroplast. Its function is as follows. Binds to the 23S rRNA. In Porphyra purpurea (Red seaweed), this protein is Large ribosomal subunit protein bL9c.